The following is a 573-amino-acid chain: MRYSQYFIPTVKETPSDAEVISHKLMLRAGMIRKLAAGIYNYLPFGLRSIRKVEAIVREEMNRAGAIELLMPAVQPAELWKESGRWEFYGKELLRFNDRKDAEFCMGPTHEEVITDLIRKEVRSYRQLPINLYQIQGKFRDEIRPRFGLMRGREFIMKDAYSFDVNEAGADVSYEKMYKAYRRIFERCGLKFRAVEADTGTIGGNYSHEFMVLADSGEDAIVSCSACEYAANMEKAETRKGEGIEHADPRPMEHVSTPGQKSIEDVAAFLGVQNTQVVKTLVLVADGEPVVALIRGDYDLNEIKLKNHLGCAELEMAEDDVVVKVTGAPTGYAGPVGLAAKVKVVADLSLEGMHNFVTGANAADTHLKNVNIGRDFSVSGFVDIRNVVIGDACPRCDSGKLEIWRGIEVGHVFKLGTKYSKALKATFLDADGKEQTIFMGCYGIGVGRTVAACIEQNHDENGIIFPIPIAPFQCIISSLSVKEDEVKAASESIYQELLEAGIEVLLDDRDERPGFKFKDADLIGIPLRIVVGAKALAEGKVELKERRSGEVEVLPIAEAIAKVKAAVKEALQV.

Belongs to the class-II aminoacyl-tRNA synthetase family. ProS type 1 subfamily. As to quaternary structure, homodimer.

It is found in the cytoplasm. It catalyses the reaction tRNA(Pro) + L-proline + ATP = L-prolyl-tRNA(Pro) + AMP + diphosphate. Functionally, catalyzes the attachment of proline to tRNA(Pro) in a two-step reaction: proline is first activated by ATP to form Pro-AMP and then transferred to the acceptor end of tRNA(Pro). As ProRS can inadvertently accommodate and process non-cognate amino acids such as alanine and cysteine, to avoid such errors it has two additional distinct editing activities against alanine. One activity is designated as 'pretransfer' editing and involves the tRNA(Pro)-independent hydrolysis of activated Ala-AMP. The other activity is designated 'posttransfer' editing and involves deacylation of mischarged Ala-tRNA(Pro). The misacylated Cys-tRNA(Pro) is not edited by ProRS. This Geobacter sp. (strain M21) protein is Proline--tRNA ligase.